The chain runs to 141 residues: Hemoglobin subunit alpha (141 aa).

Residues 1 to 141 (VLSPADKTNV…VSTVLTSKYR (141 aa)) form the Globin domain. Residue Ser-3 is modified to Phosphoserine. Lys-7 is subject to N6-succinyllysine. Thr-8 carries the phosphothreonine modification. Position 11 is an N6-succinyllysine (Lys-11). Lys-16 is modified (N6-acetyllysine; alternate). An N6-succinyllysine; alternate modification is found at Lys-16. Tyr-24 is subject to Phosphotyrosine. At Ser-35 the chain carries Phosphoserine. An N6-succinyllysine modification is found at Lys-40. Ser-49 is modified (phosphoserine). His-58 contacts O2. His-87 contacts heme b. Residue Ser-102 is modified to Phosphoserine. At Thr-108 the chain carries Phosphothreonine. Residues Ser-124 and Ser-131 each carry the phosphoserine modification. Thr-134 and Thr-137 each carry phosphothreonine. At Ser-138 the chain carries Phosphoserine.

This sequence belongs to the globin family. In terms of assembly, heterotetramer of two alpha chains and two beta chains. Red blood cells.

In terms of biological role, involved in oxygen transport from the lung to the various peripheral tissues. Functionally, hemopressin acts as an antagonist peptide of the cannabinoid receptor CNR1. Hemopressin-binding efficiently blocks cannabinoid receptor CNR1 and subsequent signaling. The protein is Hemoglobin subunit alpha (HBA) of Urocitellus parryii (Arctic ground squirrel).